Here is a 480-residue protein sequence, read N- to C-terminus: MVERKRWSENFSEWFNEVIEEAGILDKRYPVKGMNVWLPYGLKIMKNIEKFIHEEMERTGHQEVLFPALIPETEFKKEAEHIAGFEGEVFWITHAGHEPLDVKLILRPTSETAMYSMFALWIRSHADLPFKVYQIVNVYRYETKHTRPLIRVREISRFFEAHTAHADFEDAERQIKEDLEIFDNLMKRLAIAYIISKRPEWDKFPGAFYSLGAEVVMPDGRTLQIGTMHNYKQNFAKAYNILYEKEDGTHDYVHQTTFGMSERLLAAVIAIHGDDRGMVLPPTIAPIQVVIVPIPKKEKQEIVYEYAREIEEELRTAGIRVHLDMREKRPGWKFYDWELKGVPVRIEVGPRDVENSTVVLARRDKLEKITIKREELVDKVRELFDDIMKYLYERANEWLNSHIKRVETLEEAKKAFEDRRGIVEIPWCGEESCGLKMEEELDAKMLGIPYPEEKAKAPEGSRCPVCGRDAKFIARFARTY.

The protein belongs to the class-II aminoacyl-tRNA synthetase family. ProS type 3 subfamily. In terms of assembly, homodimer.

It localises to the cytoplasm. It carries out the reaction tRNA(Pro) + L-proline + ATP = L-prolyl-tRNA(Pro) + AMP + diphosphate. Functionally, catalyzes the attachment of proline to tRNA(Pro) in a two-step reaction: proline is first activated by ATP to form Pro-AMP and then transferred to the acceptor end of tRNA(Pro). This Pyrococcus abyssi (strain GE5 / Orsay) protein is Proline--tRNA ligase.